Reading from the N-terminus, the 288-residue chain is Urease accessory protein UreD 1 (288 aa).

The segment covering 1-10 has biased composition (pro residues); it reads MHGPLAPAPS. A disordered region spans residues 1 to 35; that stretch reads MHGPLAPAPSPERLGAAPARQRSDGRIRLRVGPAR.

It belongs to the UreD family. As to quaternary structure, ureD, UreF and UreG form a complex that acts as a GTP-hydrolysis-dependent molecular chaperone, activating the urease apoprotein by helping to assemble the nickel containing metallocenter of UreC. The UreE protein probably delivers the nickel.

It localises to the cytoplasm. In terms of biological role, required for maturation of urease via the functional incorporation of the urease nickel metallocenter. In Methylobacterium radiotolerans (strain ATCC 27329 / DSM 1819 / JCM 2831 / NBRC 15690 / NCIMB 10815 / 0-1), this protein is Urease accessory protein UreD 1.